The primary structure comprises 478 residues: Antiviral innate immune response effector IFIT1 (478 aa).

6 TPR repeats span residues 52–85 (VGIH…MQEE), 95–128 (LVTW…CKKL), 141–174 (IDCE…DPEN), 183–216 (ISAY…NPDN), 218–249 (YIKV…NMSS), and 251–284 (TYVF…TPTS). W147 serves as a coordination point for mRNA. G190 is an RNA binding site. Residues K259, H289, Q290, and K336 each coordinate RNA. TPR repeat units lie at residues 305 to 339 (ATKG…KPTF), 340 to 373 (EVAH…KPVV), 378 to 412 (QDIH…EQAS), and 437 to 470 (LESL…AADF).

It belongs to the IFIT family. As to quaternary structure, component of an interferon-dependent multiprotein complex, at least composed of IFIT1, IFIT2 and IFIT3. Interacts (via TPR repeats 1-4) with RPL15. Interacts with STING1/MITA; could disrupt STING1 interaction with MAVS or TBK1, acting as a negative-feedback regulator of virus-triggered signaling. Interacts with EIF3E; this could be an alternative way to inhibit translation. In terms of processing, phosphorylated. ISGylated.

The protein resides in the cytoplasm. Plays a key role in the innate immune response as part of an interferon-dependent multiprotein complex, recognizing and sequestering viral RNAs that lack host-specific 2'-O-methylation at their 5' cap. By distinguishing these RNAs from host mRNAs, inhibits their translation by competing with the translation initiation factor eIF4E. Could also prevent viral replication through its interaction with DNA replication origin-binding protein E1 of several viruses. Causes the translocation of E1 from the nucleus to the cytoplasm and can also inhibit its helicase activity in vitro. Exhibits antiviral activity against many viruses from the Flaviviridae (West Nile virus, Dengue virus, hepatitis C virus), Coronaviridae (human 229E coronavirus, SARS-CoV-2 and SARS-CoV), Poxviridae (vaccinia virus) and Togaviridae (Sindbis virus) families. The protein is Antiviral innate immune response effector IFIT1 of Homo sapiens (Human).